Here is a 117-residue protein sequence, read N- to C-terminus: uncharacterized protein (117 aa).

Belongs to the transposase 34 family.

This is an uncharacterized protein from Sinorhizobium fredii (strain NBRC 101917 / NGR234).